Here is a 178-residue protein sequence, read N- to C-terminus: GTP-dependent dephospho-CoA kinase (178 aa).

Residues Asp43, Ile44, Val45, Asp62, Lys64, and Glu120 each contribute to the GTP site.

It belongs to the GTP-dependent DPCK family.

It catalyses the reaction 3'-dephospho-CoA + GTP = GDP + CoA + H(+). It functions in the pathway cofactor biosynthesis; coenzyme A biosynthesis. Catalyzes the GTP-dependent phosphorylation of the 3'-hydroxyl group of dephosphocoenzyme A to form coenzyme A (CoA). The protein is GTP-dependent dephospho-CoA kinase of Natronomonas pharaonis (strain ATCC 35678 / DSM 2160 / CIP 103997 / JCM 8858 / NBRC 14720 / NCIMB 2260 / Gabara) (Halobacterium pharaonis).